The chain runs to 355 residues: UDP-N-acetylglucosamine--N-acetylmuramyl-(pentapeptide) pyrophosphoryl-undecaprenol N-acetylglucosamine transferase (355 aa).

UDP-N-acetyl-alpha-D-glucosamine-binding positions include 13–15, asparagine 125, arginine 162, serine 190, isoleucine 244, and glutamine 289; that span reads TGG.

It belongs to the glycosyltransferase 28 family. MurG subfamily.

Its subcellular location is the cell inner membrane. It catalyses the reaction di-trans,octa-cis-undecaprenyl diphospho-N-acetyl-alpha-D-muramoyl-L-alanyl-D-glutamyl-meso-2,6-diaminopimeloyl-D-alanyl-D-alanine + UDP-N-acetyl-alpha-D-glucosamine = di-trans,octa-cis-undecaprenyl diphospho-[N-acetyl-alpha-D-glucosaminyl-(1-&gt;4)]-N-acetyl-alpha-D-muramoyl-L-alanyl-D-glutamyl-meso-2,6-diaminopimeloyl-D-alanyl-D-alanine + UDP + H(+). Its pathway is cell wall biogenesis; peptidoglycan biosynthesis. Cell wall formation. Catalyzes the transfer of a GlcNAc subunit on undecaprenyl-pyrophosphoryl-MurNAc-pentapeptide (lipid intermediate I) to form undecaprenyl-pyrophosphoryl-MurNAc-(pentapeptide)GlcNAc (lipid intermediate II). The protein is UDP-N-acetylglucosamine--N-acetylmuramyl-(pentapeptide) pyrophosphoryl-undecaprenol N-acetylglucosamine transferase of Neisseria meningitidis serogroup C / serotype 2a (strain ATCC 700532 / DSM 15464 / FAM18).